Reading from the N-terminus, the 313-residue chain is Ribosomal RNA small subunit methyltransferase H (313 aa).

S-adenosyl-L-methionine is bound by residues 35 to 37 (GGH), Asp-55, Phe-80, Asp-102, and Gln-109.

The protein belongs to the methyltransferase superfamily. RsmH family.

It is found in the cytoplasm. The catalysed reaction is cytidine(1402) in 16S rRNA + S-adenosyl-L-methionine = N(4)-methylcytidine(1402) in 16S rRNA + S-adenosyl-L-homocysteine + H(+). Functionally, specifically methylates the N4 position of cytidine in position 1402 (C1402) of 16S rRNA. The sequence is that of Ribosomal RNA small subunit methyltransferase H from Shewanella amazonensis (strain ATCC BAA-1098 / SB2B).